Here is a 666-residue protein sequence, read N- to C-terminus: Zinc finger protein 710 (666 aa).

Residues lysine 110 and lysine 113 each participate in a glycyl lysine isopeptide (Lys-Gly) (interchain with G-Cter in SUMO2) cross-link. Residues 113–141 (KAEEEEEQEVYEVSVPGDDKDPGPAEAPA) form a disordered region. C2H2-type zinc fingers lie at residues 297–319 (WQCRMCEKSYTSKYNLVTHILGH), 325–347 (HSCPHCSKLFKQPSHLQTHLLTH), and 353–375 (HKCQVCHKAFTQTSHLKRHMLLH). A Glycyl lysine isopeptide (Lys-Gly) (interchain with G-Cter in SUMO2) cross-link involves residue lysine 379. 8 C2H2-type zinc fingers span residues 381–403 (YSCHFCGRGFAYPSELKAHEVKH), 409–431 (HVCVECGLDFSTLTQLKRHLASH), 437–459 (YQCLECDKSFHYRSQLQNHMLKH), 465–487 (FVCTECGMEFSQIHHLKQHSLTH), 493–515 (FKCEVCGREFTLQANMKRHMLIH), 521–543 (YQCHICFKTFVQKQTLKTHMIVH), 549–571 (FKCKVCGKSFNRMYNLLGHMHLH), and 577–600 (FKCPYCSSKFNLKGNLSRHMKVKH).

The protein belongs to the krueppel C2H2-type zinc-finger protein family.

It is found in the nucleus. In terms of biological role, may be involved in transcriptional regulation. This is Zinc finger protein 710 (Znf710) from Mus musculus (Mouse).